Consider the following 713-residue polypeptide: F-box/WD repeat-containing protein 7 (713 aa).

The disordered stretch occupies residues 1–150 (MNQELLSVGS…DEHTHNSNVT (150 aa)). At Ser-26 the chain carries Phosphoserine. The segment covering 46–55 (RHQEEEHTAR) has biased composition (basic and acidic residues). A compositionally biased stretch (polar residues) spans 69 to 84 (QNDSQQGQVEENNNRF). The span at 87–135 (VDEDSSGNQEEQEEDEEHAGEQEEEEEEEEEEEEEEEMDQESDDFDQSD) shows a compositional bias: acidic residues. Residues 94-136 (NQEEQEEDEEHAGEQEEEEEEEEEEEEEEEMDQESDDFDQSDD) adopt a coiled-coil conformation. Over residues 136–145 (DSSREDEHTH) the composition is skewed to basic and acidic residues. Thr-211 carries the phosphothreonine modification. Phosphoserine is present on Ser-233. In terms of domain architecture, F-box spans 284-330 (RDFISLLPKELALYVLSFLEPKDLLQAAQTCRYWRILAEDNLLWREK). WD repeat units follow at residues 384–424 (GHDD…RTLV), 426–462 (HTGG…CIHT), 465–504 (GHTS…HVLM), 506–542 (HVAA…CLHT), 545–584 (GHTN…HTLT), 586–624 (HQSL…QTLQ), and 628–665 (KHQS…FIRN).

In terms of assembly, homodimer; homodimerization plays a role in substrate binding and/or ubiquitination and degradation. Component of the SCF(FBXW7) complex consisting of CUL1, RBX1, SKP1 and FBXW7. Interacts (via F-box domain) with SKP1. Interacts (via F-box domain) with pseudophosphatase STYX; the interaction is direct and prevents FBXW7 interaction with SKP1. Interacts with cyclin-E (CCNE1 or CCNE2). Interacts with PSEN1. Forms a trimeric complex with NOTCH1 and SGK1. Interacts with NOTCH1 intracellular domain/NICD and NOTCH4 intracellular domain/NICD. Interacts with NOTCH2 intracellular domain (N2ICD). Interacts with MYC (when phosphorylated). Interacts with USP28, counteracting ubiquitination of MYC. Interacts (when phosphorylated at Thr-211) with PIN1, disrupting FBXW7 dimerization and promoting FBXW7 autoubiquitination and degradation. Interacts with UBE2QL1. Interacts with FAM83D; promotes FBXW7 degradation. Interacts with MYCN; FBXW7 competes with AURKA for binding to unphosphorylated MYCN but not for binding to phosphorylated MYCN. Interacts with JUN. Found in a complex with JUN and PRR7. Interacts with JUN and PRR7; the interaction inhibits ubiquitination-mediated JUN degradation, promoting its phosphorylation and transcriptional activity. Interacts with NFE2L1. Interacts with NR1D1. Interacts with RICTOR; mediates RICTOR ubiquitination and degradation. Phosphorylation at Thr-211 promotes interaction with PIN1, leading to disrupt FBXW7 dimerization and promoting FBXW7 autoubiquitination and degradation. Phosphorylated by ATM at Ser-26 in response to DNA damage, promoting recruitment to DNA damage sites and 'Lys-63'-linked ubiquitination of phosphorylated XRCC4. In terms of processing, ubiquitinated: autoubiquitinates following phosphorylation at Thr-211 and subsequent interaction with PIN1. Ubiquitination leads to its degradation.

The protein resides in the nucleus. It localises to the nucleoplasm. It is found in the chromosome. Its pathway is protein modification; protein ubiquitination. Substrate recognition component of a SCF (SKP1-CUL1-F-box protein) E3 ubiquitin-protein ligase complex which mediates the ubiquitination and subsequent proteasomal degradation of target proteins. Recognizes and binds phosphorylated sites/phosphodegrons within target proteins and thereafter brings them to the SCF complex for ubiquitination. Identified substrates include cyclin-E (CCNE1 or CCNE2), JUN, MYC, NOTCH1 released notch intracellular domain (NICD), NOTCH2, MCL1, MLST8, RICTOR and probably PSEN1. Acts as a negative regulator of JNK signaling by binding to phosphorylated JUN and promoting its ubiquitination and subsequent degradation. SCF(FBXW7) complex mediates the ubiquitination and subsequent degradation of NFE2L1. Involved in bone homeostasis and negative regulation of osteoclast differentiation. Regulates the amplitude of the cyclic expression of hepatic core clock genes and genes involved in lipid and glucose metabolism via ubiquitination and proteasomal degradation of their transcriptional repressor NR1D1; CDK1-dependent phosphorylation of NR1D1 is necessary for SCF(FBXW7)-mediated ubiquitination. Also able to promote 'Lys-63'-linked ubiquitination in response to DNA damage. The SCF(FBXW7) complex facilitates double-strand break repair following phosphorylation by ATM: phosphorylation promotes localization to sites of double-strand breaks and 'Lys-63'-linked ubiquitination of phosphorylated XRCC4, enhancing DNA non-homologous end joining. The chain is F-box/WD repeat-containing protein 7 from Rattus norvegicus (Rat).